The chain runs to 354 residues: S-adenosylmethionine:tRNA ribosyltransferase-isomerase (354 aa).

It belongs to the QueA family. In terms of assembly, monomer.

It localises to the cytoplasm. It carries out the reaction 7-aminomethyl-7-carbaguanosine(34) in tRNA + S-adenosyl-L-methionine = epoxyqueuosine(34) in tRNA + adenine + L-methionine + 2 H(+). The protein operates within tRNA modification; tRNA-queuosine biosynthesis. In terms of biological role, transfers and isomerizes the ribose moiety from AdoMet to the 7-aminomethyl group of 7-deazaguanine (preQ1-tRNA) to give epoxyqueuosine (oQ-tRNA). The polypeptide is S-adenosylmethionine:tRNA ribosyltransferase-isomerase (Methylobacterium radiotolerans (strain ATCC 27329 / DSM 1819 / JCM 2831 / NBRC 15690 / NCIMB 10815 / 0-1)).